A 395-amino-acid polypeptide reads, in one-letter code: Protein TAMALIN (395 aa).

Positions 1–52 (MTLRRLRKLQQKEEAAATPDPAARTPDSEVAPAAPVPTPGPPAAAATPGPPA) are disordered. The segment covering 16–33 (AATPDPAARTPDSEVAPA) has biased composition (low complexity). T77 carries the phosphothreonine modification. Residue S94 is modified to Phosphoserine. The PDZ domain maps to 101–190 (VLTLEKEDNQ…VLRLETLYGT (90 aa)). The interval 181-258 (VLRLETLYGT…GAGLLPGSLP (78 aa)) is interaction with PSCD3. Phosphotyrosine is present on Y237. R270 is subject to Omega-N-methylarginine. The tract at residues 293–349 (SEPPALPPPPPPARAFGPGPAETPAVGPGPGPRAALSRSASVRCAGPGGGGGGGAPG) is disordered. Positions 296–305 (PALPPPPPPA) are enriched in pro residues. Residues 338 to 348 (GPGGGGGGGAP) are compositionally biased toward gly residues. S387 bears the Phosphoserine mark.

Heteromer. Composed of TAMALIN, CYTH2 and at least one GRM1. Also interacts with CYTH3, GRM2, GRM3 and GRM5.

Its subcellular location is the cytoplasm. The protein resides in the perinuclear region. The protein localises to the cell membrane. It localises to the postsynaptic cell membrane. In terms of biological role, plays a role in intracellular trafficking and contributes to the macromolecular organization of group 1 metabotropic glutamate receptors (mGluRs) at synapses. The polypeptide is Protein TAMALIN (Homo sapiens (Human)).